Here is a 257-residue protein sequence, read N- to C-terminus: NAD-capped RNA hydrolase NudC (257 aa).

Arginine 69 is a binding site for substrate. Residues cysteine 98 and cysteine 101 each contribute to the Zn(2+) site. Glutamate 111 is a binding site for substrate. Cysteine 116 and cysteine 119 together coordinate Zn(2+). Tyrosine 124 serves as a coordination point for substrate. Residues 125-248 enclose the Nudix hydrolase domain; that stretch reads PQIAPCIIVA…TVARRLIEDT (124 aa). 3 residues coordinate a divalent metal cation: alanine 158, glutamate 174, and glutamate 178. The Nudix box signature appears at 159–180; the sequence is GFVEVGETLEQAVAREVMEESG. 192–199 contributes to the substrate binding site; sequence QPWPFPQS. Position 219 (glutamate 219) interacts with a divalent metal cation. Alanine 241 serves as a coordination point for substrate.

This sequence belongs to the Nudix hydrolase family. NudC subfamily. As to quaternary structure, homodimer. The cofactor is Mg(2+). Requires Mn(2+) as cofactor. Zn(2+) serves as cofactor.

It carries out the reaction a 5'-end NAD(+)-phospho-ribonucleoside in mRNA + H2O = a 5'-end phospho-adenosine-phospho-ribonucleoside in mRNA + beta-nicotinamide D-ribonucleotide + 2 H(+). The enzyme catalyses NAD(+) + H2O = beta-nicotinamide D-ribonucleotide + AMP + 2 H(+). It catalyses the reaction NADH + H2O = reduced beta-nicotinamide D-ribonucleotide + AMP + 2 H(+). In terms of biological role, mRNA decapping enzyme that specifically removes the nicotinamide adenine dinucleotide (NAD) cap from a subset of mRNAs by hydrolyzing the diphosphate linkage to produce nicotinamide mononucleotide (NMN) and 5' monophosphate mRNA. The NAD-cap is present at the 5'-end of some mRNAs and stabilizes RNA against 5'-processing. Has preference for mRNAs with a 5'-end purine. Catalyzes the hydrolysis of a broad range of dinucleotide pyrophosphates. In Citrobacter koseri (strain ATCC BAA-895 / CDC 4225-83 / SGSC4696), this protein is NAD-capped RNA hydrolase NudC.